The following is a 378-amino-acid chain: Glutamate 5-kinase (378 aa).

Lysine 19 contributes to the ATP binding site. 3 residues coordinate substrate: serine 59, aspartate 146, and asparagine 158. ATP contacts are provided by residues 178-179 (TD) and 220-226 (TGGMATK). The PUA domain occupies 285–363 (QGQIQVDAGA…GEIGEILGYK (79 aa)).

This sequence belongs to the glutamate 5-kinase family.

Its subcellular location is the cytoplasm. It catalyses the reaction L-glutamate + ATP = L-glutamyl 5-phosphate + ADP. It functions in the pathway amino-acid biosynthesis; L-proline biosynthesis; L-glutamate 5-semialdehyde from L-glutamate: step 1/2. Its function is as follows. Catalyzes the transfer of a phosphate group to glutamate to form L-glutamate 5-phosphate. The sequence is that of Glutamate 5-kinase from Moorella thermoacetica (strain ATCC 39073 / JCM 9320).